The primary structure comprises 508 residues: Cytochrome P450 4A12B (508 aa).

A signal peptide spans 1 to 37; the sequence is MSASALSSIRFPGSISEYLQVASVLSLLLLLFKTAQL. Heme is bound by residues Glu319 and Cys455.

This sequence belongs to the cytochrome P450 family. Heme serves as cofactor. Expressed in lung, but almost undetectable in the kidneys of five different strains.

The protein resides in the endoplasmic reticulum membrane. It localises to the microsome membrane. It carries out the reaction an organic molecule + reduced [NADPH--hemoprotein reductase] + O2 = an alcohol + oxidized [NADPH--hemoprotein reductase] + H2O + H(+). It catalyses the reaction dodecanoate + reduced [NADPH--hemoprotein reductase] + O2 = 11-hydroxydodecanoate + oxidized [NADPH--hemoprotein reductase] + H2O + H(+). The enzyme catalyses dodecanoate + reduced [NADPH--hemoprotein reductase] + O2 = 12-hydroxydodecanoate + oxidized [NADPH--hemoprotein reductase] + H2O + H(+). The catalysed reaction is (5Z,8Z,11Z,14Z)-eicosatetraenoate + reduced [NADPH--hemoprotein reductase] + O2 = 18-hydroxy-(5Z,8Z,11Z,14Z)-eicosatetraenoate + oxidized [NADPH--hemoprotein reductase] + H2O + H(+). It carries out the reaction (5Z,8Z,11Z,14Z)-eicosatetraenoate + reduced [NADPH--hemoprotein reductase] + O2 = 19-hydroxy-(5Z,8Z,11Z,14Z)-eicosatetraenoate + oxidized [NADPH--hemoprotein reductase] + H2O + H(+). It catalyses the reaction (5Z,8Z,11Z,14Z)-eicosatetraenoate + reduced [NADPH--hemoprotein reductase] + O2 = 20-hydroxy-(5Z,8Z,11Z,14Z)-eicosatetraenoate + oxidized [NADPH--hemoprotein reductase] + H2O + H(+). The enzyme catalyses (5Z,8Z,11Z,14Z,17Z)-eicosapentaenoate + reduced [NADPH--hemoprotein reductase] + O2 = 19-hydroxy-(5Z,8Z,11Z,14Z,17Z)-eicosapentaenoate + oxidized [NADPH--hemoprotein reductase] + H2O + H(+). The catalysed reaction is (5Z,8Z,11Z,14Z,17Z)-eicosapentaenoate + reduced [NADPH--hemoprotein reductase] + O2 = 20-hydroxy-(5Z,8Z,11Z,14Z,17Z)-eicosapentaenoate + oxidized [NADPH--hemoprotein reductase] + H2O + H(+). It carries out the reaction (5Z,8Z,11Z,14Z,17Z)-eicosapentaenoate + reduced [NADPH--hemoprotein reductase] + O2 = (17S,18R)-epoxy-(5Z,8Z,11Z,14Z)-eicosatetraenoate + oxidized [NADPH--hemoprotein reductase] + H2O + H(+). It catalyses the reaction (5Z,8Z,11Z,14Z,17Z)-eicosapentaenoate + reduced [NADPH--hemoprotein reductase] + O2 = (17R,18S)-epoxy-(5Z,8Z,11Z,14Z)-eicosatetraenoate + oxidized [NADPH--hemoprotein reductase] + H2O + H(+). It functions in the pathway lipid metabolism; fatty acid metabolism. Activated by cytochrome b5. The Vmax almost doubles in the presence of cytochrome b5. In terms of biological role, a cytochrome P450 monooxygenase involved in the metabolism of fatty acids and their oxygenated derivatives (oxylipins). Mechanistically, uses molecular oxygen inserting one oxygen atom into a substrate, and reducing the second into a water molecule, with two electrons provided by NADPH via cytochrome P450 reductase (CPR; NADPH-ferrihemoprotein reductase). Catalyzes predominantly the oxidation of the terminal carbon (omega-oxidation) of saturated and unsaturated fatty acids. May act as a major omega-hydroxylase for dodecanoic (lauric) acid in kidney. Participates in omega-hydroxylation of (5Z,8Z,11Z,14Z)-eicosatetraenoic acid (arachidonate) to 20-hydroxyeicosatetraenoic acid (20-HETE), a signaling molecule acting both as vasoconstrictive and natriuretic with overall effect on arterial blood pressure. Acts as an omega-hydroxylase and epoxidase toward (5Z,8Z,11Z,14Z,17Z)-eicosapentaenoc acid (EPA). Catalyzes the epoxidation of the last double bond of EPA with no preferred stereoselectivity, producing both (R,S) and (S,R) stereoisomers. Can also catalyze the omega-1 and omega-2 oxidation of fatty acids with lower efficiency. The chain is Cytochrome P450 4A12B from Mus musculus (Mouse).